A 280-amino-acid chain; its full sequence is Lysosome-associated membrane glycoprotein 5 (280 aa).

The signal sequence occupies residues 1-29 (MDLRRRALLGVDGLRVLLMLFHTVTRIMA). The Extracellular segment spans residues 30–235 (EQEVENLSGL…PVDEREQLEE (206 aa)). Residues Asn-35 and Asn-53 are each glycosylated (N-linked (GlcNAc...) asparagine). The helical transmembrane segment at 236 to 256 (TLPLILGLILGLVIVVTLVIY) threads the bilayer. At 257-280 (HIHHKMTANQVQIPRDRSQYKHMG) the chain is on the cytoplasmic side.

It belongs to the LAMP family. Post-translationally, glycosylated.

The protein localises to the cytoplasmic vesicle membrane. The protein resides in the cell membrane. It localises to the cell projection. It is found in the dendrite. Its subcellular location is the cytoplasmic vesicle. The protein localises to the secretory vesicle. The protein resides in the synaptic vesicle membrane. It localises to the growth cone membrane. It is found in the early endosome membrane. Its subcellular location is the recycling endosome. The protein localises to the endoplasmic reticulum-Golgi intermediate compartment membrane. The protein resides in the endosome membrane. Its function is as follows. Plays a role in short-term synaptic plasticity in a subset of GABAergic neurons in the brain. In Bos taurus (Bovine), this protein is Lysosome-associated membrane glycoprotein 5 (LAMP5).